Consider the following 554-residue polypeptide: Glucose-binding protein GlcS (554 aa).

The Cytoplasmic segment spans residues 1 to 17 (MKRKYPYSLAKGLTSTQ). Residues 18–38 (IAVIVAVIVIVIIIGVVAGFV) form a helical membrane-spanning segment. Topologically, residues 39–525 (LTKGPSTTAV…YGLTNNTQKT (487 aa)) are extracellular. The chain crosses the membrane as a helical span at residues 526 to 546 (SNSVMLFLLPFLALPLAIASI). Over 547–554 (DNKYYLLK) the chain is Cytoplasmic.

The protein belongs to the bacterial solute-binding protein 1 family. In terms of assembly, the complex is composed of two ATP-binding proteins (GlcV), two transmembrane proteins (GlcT and GlcU) and a solute-binding protein (GlcS).

It is found in the cell membrane. Binding of glucose is strongly inhibited by galactose and mannose. Part of the ABC transporter complex GlcSTUV involved in glucose uptake. Binds glucose. Can also bind galactose and mannose. The protein is Glucose-binding protein GlcS of Saccharolobus solfataricus (strain ATCC 35092 / DSM 1617 / JCM 11322 / P2) (Sulfolobus solfataricus).